We begin with the raw amino-acid sequence, 526 residues long: GMP synthase [glutamine-hydrolyzing] (526 aa).

The region spanning 9 to 208 is the Glutamine amidotransferase type-1 domain; it reads RILILDFGSQ…VMDICGCETL (200 aa). The Nucleophile role is filled by Cys86. Residues His182 and Glu184 contribute to the active site. Residues 209–401 form the GMPS ATP-PPase domain; it reads WTSSSIIEDA…LGLPYEMLYR (193 aa). 236 to 242 serves as a coordination point for ATP; sequence SGGVDSS.

As to quaternary structure, homodimer.

It carries out the reaction XMP + L-glutamine + ATP + H2O = GMP + L-glutamate + AMP + diphosphate + 2 H(+). The protein operates within purine metabolism; GMP biosynthesis; GMP from XMP (L-Gln route): step 1/1. Catalyzes the synthesis of GMP from XMP. This is GMP synthase [glutamine-hydrolyzing] from Psychromonas ingrahamii (strain DSM 17664 / CCUG 51855 / 37).